The sequence spans 376 residues: Carbamoyl phosphate synthase small chain (376 aa).

A CPSase region spans residues 1 to 183 (MENILLNKAL…IYKKKYIEKN (183 aa)). Serine 51, glycine 235, and glycine 237 together coordinate L-glutamine. In terms of domain architecture, Glutamine amidotransferase type-1 spans 187–374 (NIVAYDFGIK…INLVKDYRLN (188 aa)). The active-site Nucleophile is cysteine 263. Residues leucine 264, glutamine 267, asparagine 305, and phenylalanine 308 each contribute to the L-glutamine site. Catalysis depends on residues histidine 347 and glutamate 349.

It belongs to the CarA family. Composed of two chains; the small (or glutamine) chain promotes the hydrolysis of glutamine to ammonia, which is used by the large (or ammonia) chain to synthesize carbamoyl phosphate. Tetramer of heterodimers (alpha,beta)4.

It catalyses the reaction hydrogencarbonate + L-glutamine + 2 ATP + H2O = carbamoyl phosphate + L-glutamate + 2 ADP + phosphate + 2 H(+). The catalysed reaction is L-glutamine + H2O = L-glutamate + NH4(+). It participates in amino-acid biosynthesis; L-arginine biosynthesis; carbamoyl phosphate from bicarbonate: step 1/1. It functions in the pathway pyrimidine metabolism; UMP biosynthesis via de novo pathway; (S)-dihydroorotate from bicarbonate: step 1/3. Its function is as follows. Small subunit of the glutamine-dependent carbamoyl phosphate synthetase (CPSase). CPSase catalyzes the formation of carbamoyl phosphate from the ammonia moiety of glutamine, carbonate, and phosphate donated by ATP, constituting the first step of 2 biosynthetic pathways, one leading to arginine and/or urea and the other to pyrimidine nucleotides. The small subunit (glutamine amidotransferase) binds and cleaves glutamine to supply the large subunit with the substrate ammonia. This chain is Carbamoyl phosphate synthase small chain, found in Wigglesworthia glossinidia brevipalpis.